Consider the following 415-residue polypeptide: Zona pellucida-like domain-containing protein 1 (415 aa).

The N-terminal stretch at 1–19 (MEPIWLLLLLAIFTVSVSA) is a signal peptide. At 20–372 (QFNGYNCDAN…QQFQINSVTS (353 aa)) the chain is on the extracellular side. Residues 43–320 (YCGVQTITMK…PTCHNRDRRD (278 aa)) enclose the ZP domain. 4 cysteine pairs are disulfide-bonded: cysteine 44–cysteine 155, cysteine 79–cysteine 104, cysteine 235–cysteine 296, and cysteine 255–cysteine 313. Residues 373-393 (ALISGVVILGATSLSFFIIAL) traverse the membrane as a helical segment. At 394–415 (TLLNRKKQNSLVLCGIRNPVFN) the chain is on the cytoplasmic side.

In terms of processing, proteolytically cleaved before the transmembrane segment to yield the secreted form found in the extracellular matrix of the cupula.

It is found in the cytoplasmic vesicle membrane. Its subcellular location is the secreted. It localises to the extracellular space. The protein resides in the extracellular matrix. Its function is as follows. Glycoprotein which is a component of the gelatinous extracellular matrix in the cupulae of the vestibular organ. The protein is Zona pellucida-like domain-containing protein 1 (zpld1) of Xenopus laevis (African clawed frog).